A 453-amino-acid polypeptide reads, in one-letter code: Ribosomal protein uS12 methylthiotransferase RimO (453 aa).

The MTTase N-terminal domain occupies 5–120 (PKVGFVSLGC…VMQAVHSHLP (116 aa)). 6 residues coordinate [4Fe-4S] cluster: Cys-14, Cys-50, Cys-79, Cys-151, Cys-155, and Cys-158. The region spanning 137 to 382 (LTPRHYAYLK…MEVAEEVSAN (246 aa)) is the Radical SAM core domain. The TRAM domain occupies 385–453 (QRKIGKTLKV…ADGHDLWGEV (69 aa)).

Belongs to the methylthiotransferase family. RimO subfamily. [4Fe-4S] cluster serves as cofactor.

It is found in the cytoplasm. The catalysed reaction is L-aspartate(89)-[ribosomal protein uS12]-hydrogen + (sulfur carrier)-SH + AH2 + 2 S-adenosyl-L-methionine = 3-methylsulfanyl-L-aspartate(89)-[ribosomal protein uS12]-hydrogen + (sulfur carrier)-H + 5'-deoxyadenosine + L-methionine + A + S-adenosyl-L-homocysteine + 2 H(+). In terms of biological role, catalyzes the methylthiolation of an aspartic acid residue of ribosomal protein uS12. The protein is Ribosomal protein uS12 methylthiotransferase RimO of Burkholderia orbicola (strain MC0-3).